Here is a 172-residue protein sequence, read N- to C-terminus: MAARGVNKVILVGHIGQDPEVRYMPNGGAVANLTLATSETWRVRQDGEMREHTEWHRVVVFGKLAEIASEYLRKGAQVYIEGQLRTRKWTDQSGQDKYTTEVIVNVGGTMQMLGRHNSQPQQEPQTPPTAAKGEGKAVKGAGNAAKGKNAAAPQQPPAQPDPAYDFDDDIPF.

The SSB domain occupies 6 to 111; sequence VNKVILVGHI…VIVNVGGTMQ (106 aa). A DNA-binding region spans residues 55-61; the sequence is WHRVVVF. Residues 113-172 form a disordered region; it reads LGRHNSQPQQEPQTPPTAAKGEGKAVKGAGNAAKGKNAAAPQQPPAQPDPAYDFDDDIPF. The segment covering 119-153 has biased composition (low complexity); that stretch reads QPQQEPQTPPTAAKGEGKAVKGAGNAAKGKNAAAP. Positions 167–172 match the Important for interaction with partner proteins motif; that stretch reads DDDIPF.

In terms of assembly, homotetramer.

Its function is as follows. Plays an important role in DNA replication, recombination and repair. Binds to ssDNA and to an array of partner proteins to recruit them to their sites of action during DNA metabolism. The chain is Single-stranded DNA-binding protein 2 (ssb2) from Salmonella typhimurium (strain LT2 / SGSC1412 / ATCC 700720).